The sequence spans 99 residues: Co-chaperonin GroES (99 aa).

It belongs to the GroES chaperonin family. In terms of assembly, heptamer of 7 subunits arranged in a ring. Interacts with the chaperonin GroEL.

It localises to the cytoplasm. Together with the chaperonin GroEL, plays an essential role in assisting protein folding. The GroEL-GroES system forms a nano-cage that allows encapsulation of the non-native substrate proteins and provides a physical environment optimized to promote and accelerate protein folding. GroES binds to the apical surface of the GroEL ring, thereby capping the opening of the GroEL channel. The chain is Co-chaperonin GroES from Corynebacterium kroppenstedtii (strain DSM 44385 / JCM 11950 / CIP 105744 / CCUG 35717).